We begin with the raw amino-acid sequence, 615 residues long: Kelch-like protein 26 (615 aa).

Over residues 1 to 21 (MAESGGSSGGAGGGGAFGAGP) the composition is skewed to gly residues. The tract at residues 1 to 35 (MAESGGSSGGAGGGGAFGAGPGPERPNSTADKNGA) is disordered. Ala2 is modified (N-acetylalanine). Positions 63 to 130 (LDVVLTINRE…AYSAEVTLDL (68 aa)) constitute a BTB domain. In terms of domain architecture, BACK spans 165–266 (CLNIGQMATT…QSSELVDSVQ (102 aa)). Kelch repeat units follow at residues 310–361 (SLVT…VLDN), 362–413 (FVYV…VLCG), 414–460 (MVYA…ASGG), 461–508 (RLYI…GAGG), 510–559 (IYAL…LLER), and 561–608 (IYIV…PVLL).

Its function is as follows. May play a role in endo(sarco)plasmic reticulum (ER/SR) mitochondrial signaling. May be part of the ubiquitin-proteasome system (UPS) and affect ubiquitination and degradation of target substrates in cardiomyocytes. This is Kelch-like protein 26 (KLHL26) from Homo sapiens (Human).